We begin with the raw amino-acid sequence, 548 residues long: Glucose-6-phosphate isomerase 1 (548 aa).

The Proton donor role is filled by E353. Active-site residues include H384 and K512.

This sequence belongs to the GPI family.

It is found in the cytoplasm. It catalyses the reaction alpha-D-glucose 6-phosphate = beta-D-fructose 6-phosphate. It participates in carbohydrate biosynthesis; gluconeogenesis. Its pathway is carbohydrate degradation; glycolysis; D-glyceraldehyde 3-phosphate and glycerone phosphate from D-glucose: step 2/4. Catalyzes the reversible isomerization of glucose-6-phosphate to fructose-6-phosphate. This Neisseria gonorrhoeae (strain ATCC 700825 / FA 1090) protein is Glucose-6-phosphate isomerase 1.